Here is a 112-residue protein sequence, read N- to C-terminus: Cell cycle protein GpsB (112 aa).

Positions 38-72 (IKDYEAFHKEFEQLKQQNARLKRELEEQKLAATQV) form a coiled coil.

The protein belongs to the GpsB family. In terms of assembly, forms polymers through the coiled coil domains. Interacts with PBP1, MreC and EzrA.

It is found in the cytoplasm. Divisome component that associates with the complex late in its assembly, after the Z-ring is formed, and is dependent on DivIC and PBP2B for its recruitment to the divisome. Together with EzrA, is a key component of the system that regulates PBP1 localization during cell cycle progression. Its main role could be the removal of PBP1 from the cell pole after pole maturation is completed. Also contributes to the recruitment of PBP1 to the division complex. Not essential for septum formation. This Bacillus anthracis (strain A0248) protein is Cell cycle protein GpsB.